A 75-amino-acid chain; its full sequence is Cytochrome c oxidase subunit 6C (75 aa).

At 1–13 (MAPEVLPKPQMRG) the chain is on the mitochondrial matrix side. The helical transmembrane segment at 14-54 (LLAKRLRFHMVTAFVLSLGVAALYKFRVADKRKKAYADFYR) threads the bilayer. Residues 55-75 (NYDAMKDFEEMRKAGIFQSVK) are Mitochondrial intermembrane-facing.

It belongs to the cytochrome c oxidase subunit 6c family. Component of the cytochrome c oxidase (complex IV, CIV), a multisubunit enzyme composed of 14 subunits. The complex is composed of a catalytic core of 3 subunits MT-CO1, MT-CO2 and MT-CO3, encoded in the mitochondrial DNA, and 11 supernumerary subunits COX4I, COX5A, COX5B, COX6A, COX6B, COX6C, COX7A, COX7B, COX7C, COX8 and NDUFA4, which are encoded in the nuclear genome. The complex exists as a monomer or a dimer and forms supercomplexes (SCs) in the inner mitochondrial membrane with NADH-ubiquinone oxidoreductase (complex I, CI) and ubiquinol-cytochrome c oxidoreductase (cytochrome b-c1 complex, complex III, CIII), resulting in different assemblies (supercomplex SCI(1)III(2)IV(1) and megacomplex MCI(2)III(2)IV(2)).

Its subcellular location is the mitochondrion inner membrane. The protein operates within energy metabolism; oxidative phosphorylation. Its function is as follows. Component of the cytochrome c oxidase, the last enzyme in the mitochondrial electron transport chain which drives oxidative phosphorylation. The respiratory chain contains 3 multisubunit complexes succinate dehydrogenase (complex II, CII), ubiquinol-cytochrome c oxidoreductase (cytochrome b-c1 complex, complex III, CIII) and cytochrome c oxidase (complex IV, CIV), that cooperate to transfer electrons derived from NADH and succinate to molecular oxygen, creating an electrochemical gradient over the inner membrane that drives transmembrane transport and the ATP synthase. Cytochrome c oxidase is the component of the respiratory chain that catalyzes the reduction of oxygen to water. Electrons originating from reduced cytochrome c in the intermembrane space (IMS) are transferred via the dinuclear copper A center (CU(A)) of subunit 2 and heme A of subunit 1 to the active site in subunit 1, a binuclear center (BNC) formed by heme A3 and copper B (CU(B)). The BNC reduces molecular oxygen to 2 water molecules using 4 electrons from cytochrome c in the IMS and 4 protons from the mitochondrial matrix. The polypeptide is Cytochrome c oxidase subunit 6C (COX6C) (Trachypithecus cristatus (Silvered leaf-monkey)).